A 95-amino-acid polypeptide reads, in one-letter code: Small ribosomal subunit protein bS18 (95 aa).

It belongs to the bacterial ribosomal protein bS18 family. As to quaternary structure, part of the 30S ribosomal subunit. Forms a tight heterodimer with protein bS6.

In terms of biological role, binds as a heterodimer with protein bS6 to the central domain of the 16S rRNA, where it helps stabilize the platform of the 30S subunit. The polypeptide is Small ribosomal subunit protein bS18 (Rickettsia rickettsii (strain Sheila Smith)).